Consider the following 140-residue polypeptide: Nucleoside diphosphate kinase (140 aa).

ATP contacts are provided by Lys-11, Phe-59, Arg-87, Thr-93, Arg-104, and Asn-114. His-117 serves as the catalytic Pros-phosphohistidine intermediate.

This sequence belongs to the NDK family. As to quaternary structure, homotetramer. Mg(2+) is required as a cofactor.

The protein resides in the cytoplasm. The enzyme catalyses a 2'-deoxyribonucleoside 5'-diphosphate + ATP = a 2'-deoxyribonucleoside 5'-triphosphate + ADP. The catalysed reaction is a ribonucleoside 5'-diphosphate + ATP = a ribonucleoside 5'-triphosphate + ADP. Its function is as follows. Major role in the synthesis of nucleoside triphosphates other than ATP. The ATP gamma phosphate is transferred to the NDP beta phosphate via a ping-pong mechanism, using a phosphorylated active-site intermediate. The sequence is that of Nucleoside diphosphate kinase from Roseobacter denitrificans (strain ATCC 33942 / OCh 114) (Erythrobacter sp. (strain OCh 114)).